The primary structure comprises 755 residues: Photosystem I P700 chlorophyll a apoprotein A1 (755 aa).

The next 8 helical transmembrane spans lie at 72 to 95 (IFSA…YHGA), 158 to 181 (LLCT…FHYH), 197 to 221 (LNHH…HVAI), 297 to 315 (QAHH…GHMY), 352 to 375 (WHAQ…QHMY), 391 to 417 (ISLF…IYMV), 439 to 461 (AIIS…FYVH), and 536 to 554 (FMVH…LILL). The [4Fe-4S] cluster site is built by cysteine 578 and cysteine 587. 2 helical membrane-spanning segments follow: residues 594–615 (HVFL…HFSW) and 669–691 (LSAY…MFLF). Histidine 680 contacts chlorophyll a'. The chlorophyll a site is built by methionine 688 and tyrosine 696. Position 697 (tryptophan 697) interacts with phylloquinone. The helical transmembrane segment at 729-749 (AVGVAHYLLGGIVTTWAFFLA) threads the bilayer.

The protein belongs to the PsaA/PsaB family. As to quaternary structure, the PsaA/B heterodimer binds the P700 chlorophyll special pair and subsequent electron acceptors. PSI consists of a core antenna complex that captures photons, and an electron transfer chain that converts photonic excitation into a charge separation. The cyanobacterial PSI reaction center is composed of one copy each of PsaA,B,C,D,E,F,I,J,K,L,M and X, and forms trimeric complexes. Requires PSI electron transfer chain: 5 chlorophyll a, 1 chlorophyll a', 2 phylloquinones and 3 4Fe-4S clusters. PSI core antenna: 90 chlorophyll a, 22 carotenoids, 3 phospholipids and 1 galactolipid. P700 is a chlorophyll a/chlorophyll a' dimer, A0 is one or more chlorophyll a, A1 is one or both phylloquinones and FX is a shared 4Fe-4S iron-sulfur center. as cofactor.

The protein resides in the cellular thylakoid membrane. The catalysed reaction is reduced [plastocyanin] + hnu + oxidized [2Fe-2S]-[ferredoxin] = oxidized [plastocyanin] + reduced [2Fe-2S]-[ferredoxin]. In terms of biological role, psaA and PsaB bind P700, the primary electron donor of photosystem I (PSI), as well as the electron acceptors A0, A1 and FX. PSI is a plastocyanin/cytochrome c6-ferredoxin oxidoreductase, converting photonic excitation into a charge separation, which transfers an electron from the donor P700 chlorophyll pair to the spectroscopically characterized acceptors A0, A1, FX, FA and FB in turn. Oxidized P700 is reduced on the lumenal side of the thylakoid membrane by plastocyanin or cytochrome c6. The chain is Photosystem I P700 chlorophyll a apoprotein A1 from Synechococcus sp. (strain JA-2-3B'a(2-13)) (Cyanobacteria bacterium Yellowstone B-Prime).